The primary structure comprises 179 residues: MSRVGKSIIKLPAKVEVKADAEALTIKGPLGELKTPIYEGVSANVENGELVFTRKSEDQKTVALHGLVRSLAMNCVKGVTSGWEKNLEITGVGYRAQKRGKDLVMALGYSHEVVFPEPNGIKIEVADQLKIKVSGIDRQLVGQVAADIRSKRPPEPYKGKGIKYQNEYIRRKAGKTGKK.

Belongs to the universal ribosomal protein uL6 family. Part of the 50S ribosomal subunit.

This protein binds to the 23S rRNA, and is important in its secondary structure. It is located near the subunit interface in the base of the L7/L12 stalk, and near the tRNA binding site of the peptidyltransferase center. In Leptospira biflexa serovar Patoc (strain Patoc 1 / ATCC 23582 / Paris), this protein is Large ribosomal subunit protein uL6.